The chain runs to 496 residues: Omega-crystallin (496 aa).

This sequence belongs to the aldehyde dehydrogenase family. As to expression, lens.

Functionally, omega-crystallins are structural components of squids and octopi eye lens. Contains relatively little if any DHAL activity. The chain is Omega-crystallin from Enteroctopus dofleini (North Pacific giant octopus).